We begin with the raw amino-acid sequence, 433 residues long: Dihydroorotase (433 aa).

Zn(2+) is bound by residues His63 and His65. Substrate contacts are provided by residues His65–Arg67 and Asn97. The Zn(2+) site is built by Asp155, His182, and His235. Asn283 is a binding site for substrate. Asp310 contacts Zn(2+). Asp310 is a catalytic residue. Position 314 (His314) interacts with substrate.

This sequence belongs to the metallo-dependent hydrolases superfamily. DHOase family. Class I DHOase subfamily. Zn(2+) serves as cofactor.

It carries out the reaction (S)-dihydroorotate + H2O = N-carbamoyl-L-aspartate + H(+). The protein operates within pyrimidine metabolism; UMP biosynthesis via de novo pathway; (S)-dihydroorotate from bicarbonate: step 3/3. Catalyzes the reversible cyclization of carbamoyl aspartate to dihydroorotate. This chain is Dihydroorotase, found in Anaeromyxobacter sp. (strain K).